Here is a 267-residue protein sequence, read N- to C-terminus: tRNA pseudouridine synthase A (267 aa).

Catalysis depends on Asp51, which acts as the Nucleophile. Tyr109 contributes to the substrate binding site.

Belongs to the tRNA pseudouridine synthase TruA family. Homodimer.

It catalyses the reaction uridine(38/39/40) in tRNA = pseudouridine(38/39/40) in tRNA. Functionally, formation of pseudouridine at positions 38, 39 and 40 in the anticodon stem and loop of transfer RNAs. This is tRNA pseudouridine synthase A from Staphylococcus saprophyticus subsp. saprophyticus (strain ATCC 15305 / DSM 20229 / NCIMB 8711 / NCTC 7292 / S-41).